A 353-amino-acid polypeptide reads, in one-letter code: Photosystem II protein D1 (353 aa).

Residue threonine 2 is modified to N-acetylthreonine. Residue threonine 2 is modified to Phosphothreonine. 3 helical membrane passes run tyrosine 29–serine 46, histidine 118–leucine 133, and tryptophan 142–alanine 156. Histidine 118 contacts chlorophyll a. Tyrosine 126 provides a ligand contact to pheophytin a. Aspartate 170 and glutamate 189 together coordinate [CaMn4O5] cluster. A helical transmembrane segment spans residues phenylalanine 197–leucine 218. Histidine 198 contacts chlorophyll a. A quinone-binding positions include histidine 215 and serine 264 to phenylalanine 265. Histidine 215 lines the Fe cation pocket. Histidine 272 contributes to the Fe cation binding site. The chain crosses the membrane as a helical span at residues phenylalanine 274 to leucine 288. [CaMn4O5] cluster-binding residues include histidine 332, glutamate 333, aspartate 342, and alanine 344. Positions alanine 345–glycine 353 are excised as a propeptide.

The protein belongs to the reaction center PufL/M/PsbA/D family. As to quaternary structure, PSII is composed of 1 copy each of membrane proteins PsbA, PsbB, PsbC, PsbD, PsbE, PsbF, PsbH, PsbI, PsbJ, PsbK, PsbL, PsbM, PsbT, PsbX, PsbY, PsbZ, Psb30/Ycf12, at least 3 peripheral proteins of the oxygen-evolving complex and a large number of cofactors. It forms dimeric complexes. The D1/D2 heterodimer binds P680, chlorophylls that are the primary electron donor of PSII, and subsequent electron acceptors. It shares a non-heme iron and each subunit binds pheophytin, quinone, additional chlorophylls, carotenoids and lipids. D1 provides most of the ligands for the Mn4-Ca-O5 cluster of the oxygen-evolving complex (OEC). There is also a Cl(-1) ion associated with D1 and D2, which is required for oxygen evolution. The PSII complex binds additional chlorophylls, carotenoids and specific lipids. serves as cofactor. Post-translationally, tyr-161 forms a radical intermediate that is referred to as redox-active TyrZ, YZ or Y-Z. C-terminally processed by CTPA; processing is essential to allow assembly of the oxygen-evolving complex and thus photosynthetic growth.

It localises to the plastid. Its subcellular location is the chloroplast thylakoid membrane. The catalysed reaction is 2 a plastoquinone + 4 hnu + 2 H2O = 2 a plastoquinol + O2. Functionally, photosystem II (PSII) is a light-driven water:plastoquinone oxidoreductase that uses light energy to abstract electrons from H(2)O, generating O(2) and a proton gradient subsequently used for ATP formation. It consists of a core antenna complex that captures photons, and an electron transfer chain that converts photonic excitation into a charge separation. The D1/D2 (PsbA/PsbD) reaction center heterodimer binds P680, the primary electron donor of PSII as well as several subsequent electron acceptors. The chain is Photosystem II protein D1 from Nicotiana debneyi (Debney's tobacco).